We begin with the raw amino-acid sequence, 166 residues long: uncharacterized protein (166 aa).

4Fe-4S ferredoxin-type domains follow at residues 3–33 (MKKI…GRIA), 37–67 (KDGK…EHKD), and 68–97 (GYVY…MEDK). [4Fe-4S] cluster-binding residues include Cys-13, Cys-16, Cys-19, Cys-23, Cys-46, Cys-49, Cys-54, Cys-58, Cys-77, Cys-80, Cys-83, Cys-87, Cys-101, Cys-104, Cys-111, and Cys-115.

[4Fe-4S] cluster is required as a cofactor.

This is an uncharacterized protein from Methanocaldococcus jannaschii (strain ATCC 43067 / DSM 2661 / JAL-1 / JCM 10045 / NBRC 100440) (Methanococcus jannaschii).